Here is a 642-residue protein sequence, read N- to C-terminus: Sodium- and chloride-dependent neutral and basic amino acid transporter B(0+) (642 aa).

Residues 1-44 lie on the Cytoplasmic side of the membrane; sequence MDKLKCPSFFKCREKEKVSASSENFHVGENDENQDRGNWSKKSD. The next 3 helical transmembrane spans lie at 45-65, 72-92, and 110-130; these read YLLSMIGYAVGLGNVWRFPYL, GAFLIPYAIMLALAGLPLFFL, and ILPLFQGVGITMVLISIFVTI. The Extracellular segment spans residues 131 to 234; that stretch reads YYNVIIAYSL…RSSGMNETGV (104 aa). N-linked (GlcNAc...) asparagine glycosylation is found at asparagine 155, asparagine 163, asparagine 174, asparagine 189, asparagine 197, asparagine 202, and asparagine 230. The next 2 helical transmembrane spans lie at 235-255 and 261-281; these read IVWYLALCLLLAWLIVGAALF and SGKVVYFTALFPYVVLLILLV. Asparagine 302 carries an N-linked (GlcNAc...) asparagine glycan. 7 consecutive transmembrane segments (helical) span residues 315–335, 348–368, 399–419, 450–477, 480–500, 528–548, and 563–583; these read AATQIFYSLSVAWGGLVALSS, IVVCLTNCLTSVFAGFAIFSI, LAQLPGGPFWSILFFFMLLTL, ITLGCCLVLFLLGLVCVTQAGIYWVHLI, FCAGWGILIAAILELVGIIWI, CWFVITPILLIAIFIWSLVQF, and VALGWCMIVFCIIWIPIMAII. Over 584-642 the chain is Cytoplasmic; the sequence is KIIQAKGNIFQRLISCCRPASNWGPYLEQHRGERYKDMVDPKKEADHEIPTVSGSRKPE. A compositionally biased stretch (basic and acidic residues) spans 622–632; the sequence is VDPKKEADHEI. The segment at 622 to 642 is disordered; sequence VDPKKEADHEIPTVSGSRKPE.

It belongs to the sodium:neurotransmitter symporter (SNF) (TC 2.A.22) family. SLC6A14 subfamily. As to expression, levels are highest in adult and fetal lung, in trachea and salivary gland. Lower levels detected in mammary gland, stomach and pituitary gland, and very low levels in colon, uterus, prostate and testis.

Its subcellular location is the membrane. It is found in the apical cell membrane. It catalyses the reaction glycine(out) + chloride(out) + 2 Na(+)(out) = glycine(in) + chloride(in) + 2 Na(+)(in). The enzyme catalyses L-leucine(out) + chloride(out) + 2 Na(+)(out) = L-leucine(in) + chloride(in) + 2 Na(+)(in). It carries out the reaction L-glutamine(out) + chloride(out) + 2 Na(+)(out) = L-glutamine(in) + chloride(in) + 2 Na(+)(in). The catalysed reaction is L-arginine(out) + chloride(out) + 2 Na(+)(out) = L-arginine(in) + chloride(in) + 2 Na(+)(in). It catalyses the reaction (R)-carnitine(out) + chloride(out) + 2 Na(+)(out) = (R)-carnitine(in) + chloride(in) + 2 Na(+)(in). The enzyme catalyses O-butanoyl-(R)-carnitine(out) + chloride(out) + 2 Na(+)(out) = O-butanoyl-(R)-carnitine(in) + chloride(in) + 2 Na(+)(in). It carries out the reaction O-propanoyl-(R)-carnitine(out) + chloride(out) + 2 Na(+)(out) = O-propanoyl-(R)-carnitine(in) + chloride(in) + 2 Na(+)(in). The catalysed reaction is L-isoleucine(out) + chloride(out) + 2 Na(+)(out) = L-isoleucine(in) + chloride(in) + 2 Na(+)(in). It catalyses the reaction L-methionine(out) + chloride(out) + 2 Na(+)(out) = L-methionine(in) + chloride(in) + 2 Na(+)(in). The enzyme catalyses L-valine(out) + chloride(out) + 2 Na(+)(out) = L-valine(in) + chloride(in) + 2 Na(+)(in). It carries out the reaction L-alanine(out) + chloride(out) + 2 Na(+)(out) = L-alanine(in) + chloride(in) + 2 Na(+)(in). The catalysed reaction is L-serine(out) + chloride(out) + 2 Na(+)(out) = L-serine(in) + chloride(in) + 2 Na(+)(in). It catalyses the reaction L-cysteine(out) + chloride(out) + 2 Na(+)(out) = L-cysteine(in) + chloride(in) + 2 Na(+)(in). The enzyme catalyses L-asparagine(out) + chloride(out) + 2 Na(+)(out) = L-asparagine(in) + chloride(in) + 2 Na(+)(in). It carries out the reaction L-threonine(out) + chloride(out) + 2 Na(+)(out) = L-threonine(in) + chloride(in) + 2 Na(+)(in). The catalysed reaction is L-phenylalanine(out) + chloride(out) + 2 Na(+)(out) = L-phenylalanine(in) + chloride(in) + 2 Na(+)(in). It catalyses the reaction L-tryptophan(out) + chloride(out) + 2 Na(+)(out) = L-tryptophan(in) + chloride(in) + 2 Na(+)(in). The enzyme catalyses L-tyrosine(out) + chloride(out) + 2 Na(+)(out) = L-tyrosine(in) + chloride(in) + 2 Na(+)(in). It carries out the reaction L-histidine(out) + chloride(out) + 2 Na(+)(out) = L-histidine(in) + chloride(in) + 2 Na(+)(in). The catalysed reaction is L-lysine(out) + chloride(out) + 2 Na(+)(out) = L-lysine(in) + chloride(in) + 2 Na(+)(in). It catalyses the reaction beta-alanine(out) + chloride(out) + 2 Na(+)(out) = beta-alanine(in) + chloride(in) + 2 Na(+)(in). In terms of biological role, amino acid transporter that plays an important role in the absorption of amino acids in the intestinal tract. Mediates the uptake of a broad range of neutral and cationic amino acids (with the exception of proline) in a Na(+)/Cl(-)-dependent manner. Transports non-alpha-amino acids such as beta-alanine with low affinity, and has a higher affinity for dipolar and cationic amino acids such as leucine and lysine. Can also transport carnitine, butirylcarnitine and propionylcarnitine coupled to the transmembrane gradients of Na(+) and Cl(-). This chain is Sodium- and chloride-dependent neutral and basic amino acid transporter B(0+), found in Homo sapiens (Human).